We begin with the raw amino-acid sequence, 335 residues long: Holliday junction branch migration complex subunit RuvB (335 aa).

The segment at 1–183 (MDERIISSET…FGVIDHLEFY (183 aa)) is large ATPase domain (RuvB-L). Residues L22, R23, G64, K67, T68, T69, 130-132 (EDY), R173, Y183, and R220 each bind ATP. T68 serves as a coordination point for Mg(2+). Positions 184 to 254 (TEEQLTEIVL…LAKEALTLLQ (71 aa)) are small ATPAse domain (RuvB-S). A head domain (RuvB-H) region spans residues 257–335 (PRGLDTIDQK…HLGISYEKEV (79 aa)). Positions 293, 312, and 317 each coordinate DNA.

The protein belongs to the RuvB family. As to quaternary structure, homohexamer. Forms an RuvA(8)-RuvB(12)-Holliday junction (HJ) complex. HJ DNA is sandwiched between 2 RuvA tetramers; dsDNA enters through RuvA and exits via RuvB. An RuvB hexamer assembles on each DNA strand where it exits the tetramer. Each RuvB hexamer is contacted by two RuvA subunits (via domain III) on 2 adjacent RuvB subunits; this complex drives branch migration. In the full resolvosome a probable DNA-RuvA(4)-RuvB(12)-RuvC(2) complex forms which resolves the HJ.

Its subcellular location is the cytoplasm. The enzyme catalyses ATP + H2O = ADP + phosphate + H(+). Functionally, the RuvA-RuvB-RuvC complex processes Holliday junction (HJ) DNA during genetic recombination and DNA repair, while the RuvA-RuvB complex plays an important role in the rescue of blocked DNA replication forks via replication fork reversal (RFR). RuvA specifically binds to HJ cruciform DNA, conferring on it an open structure. The RuvB hexamer acts as an ATP-dependent pump, pulling dsDNA into and through the RuvAB complex. RuvB forms 2 homohexamers on either side of HJ DNA bound by 1 or 2 RuvA tetramers; 4 subunits per hexamer contact DNA at a time. Coordinated motions by a converter formed by DNA-disengaged RuvB subunits stimulates ATP hydrolysis and nucleotide exchange. Immobilization of the converter enables RuvB to convert the ATP-contained energy into a lever motion, pulling 2 nucleotides of DNA out of the RuvA tetramer per ATP hydrolyzed, thus driving DNA branch migration. The RuvB motors rotate together with the DNA substrate, which together with the progressing nucleotide cycle form the mechanistic basis for DNA recombination by continuous HJ branch migration. Branch migration allows RuvC to scan DNA until it finds its consensus sequence, where it cleaves and resolves cruciform DNA. In Listeria welshimeri serovar 6b (strain ATCC 35897 / DSM 20650 / CCUG 15529 / CIP 8149 / NCTC 11857 / SLCC 5334 / V8), this protein is Holliday junction branch migration complex subunit RuvB.